The sequence spans 190 residues: Coat protein (190 aa).

It belongs to the potexvirus capsid protein family.

It localises to the virion. Functionally, required for genome encapsidation. Forms ribonucleoprotein complexes along with TGB1 helicase and viral RNA. The sequence is that of Coat protein from White clover mosaic virus (strain M) (WCMV).